A 465-amino-acid polypeptide reads, in one-letter code: Pancreatic triacylglycerol lipase (465 aa).

The N-terminal stretch at 1–16 (MLLLWILSLFLETVAG) is a signal peptide. 2 cysteine pairs are disulfide-bonded: Cys-20–Cys-26 and Cys-107–Cys-118. Catalysis depends on Ser-169, which acts as the Nucleophile. The active-site Charge relay system is the Asp-193. Ca(2+) contacts are provided by Glu-204, Arg-207, Asp-209, and Asp-212. A disulfide bridge links Cys-254 with Cys-278. His-280 functions as the Charge relay system in the catalytic mechanism. 2 disulfides stabilise this stretch: Cys-302–Cys-313 and Cys-316–Cys-321. Asn-351, Asn-398, and Asn-425 each carry an N-linked (GlcNAc...) asparagine glycan. The PLAT domain maps to 355–465 (WRYRIAVTLS…EEVLLTLQPC (111 aa)). A disulfide bridge connects residues Cys-449 and Cys-465.

Belongs to the AB hydrolase superfamily. Lipase family. In terms of assembly, forms a 1:1 stoichiometric complex with (pro)colipase/CLPS.

The protein resides in the secreted. The enzyme catalyses a triacylglycerol + H2O = a diacylglycerol + a fatty acid + H(+). The catalysed reaction is 1,2,3-tributanoylglycerol + H2O = dibutanoylglycerol + butanoate + H(+). It carries out the reaction 1,2,3-tri-(9Z-octadecenoyl)-glycerol + H2O = di-(9Z)-octadecenoylglycerol + (9Z)-octadecenoate + H(+). It catalyses the reaction all-trans-retinyl hexadecanoate + H2O = all-trans-retinol + hexadecanoate + H(+). The enzyme catalyses 1,2-di-(9Z-octadecenoyl)-glycerol + H2O = (9Z-octadecenoyl)-glycerol + (9Z)-octadecenoate + H(+). With respect to regulation, inhibited by bile salts, is reactivated by (pro)colipase/CLPS. Plays an important role in fat metabolism. It preferentially splits the esters of long-chain fatty acids at positions 1 and 3, producing mainly 2-monoacylglycerol and free fatty acids, and shows considerably higher activity against insoluble emulsified substrates than against soluble ones. The sequence is that of Pancreatic triacylglycerol lipase (PNLIP) from Cavia porcellus (Guinea pig).